Consider the following 66-residue polypeptide: COP-associated protein (66 aa).

An HMA domain is found at Met1 to Gly66. Residues Cys12 and Cys15 each contribute to the Cu cation site.

In terms of biological role, part of a cation-transporting system which is associated with copper export out of the H.pylori cells. In Helicobacter felis (strain ATCC 49179 / CCUG 28539 / NCTC 12436 / CS1), this protein is COP-associated protein (copP).